The following is a 164-amino-acid chain: uncharacterized protein (164 aa).

The first 18 residues, 1–18, serve as a signal peptide directing secretion; that stretch reads MILILTIIVGFLIYFVTA. N-linked (GlcNAc...) asparagine; by host glycosylation is present at Asn-88.

The protein belongs to the IIV-6 357R family.

This is an uncharacterized protein from Acheta domesticus (House cricket).